Consider the following 301-residue polypeptide: NADH-cytochrome b5 reductase 2 (301 aa).

A helical membrane pass occupies residues 14–30; sequence FLVPFAGATALSIGLAL. An FAD-binding FR-type domain is found at 51–155; the sequence is NEWVDLKLSK…KGPIVKWKWE (105 aa). Residue 158–193 coordinates FAD; that stretch reads QFKSIALIGGGTGITPLYQLLHQITSNPKDNTKVNL.

Belongs to the flavoprotein pyridine nucleotide cytochrome reductase family. It depends on FAD as a cofactor.

It localises to the mitochondrion outer membrane. The catalysed reaction is 2 Fe(III)-[cytochrome b5] + NADH = 2 Fe(II)-[cytochrome b5] + NAD(+) + H(+). Its function is as follows. May mediate the reduction of outer membrane cytochrome b5. This Candida albicans (strain SC5314 / ATCC MYA-2876) (Yeast) protein is NADH-cytochrome b5 reductase 2 (MCR1).